The primary structure comprises 172 residues: ATP synthase subunit b (172 aa).

Residues 12-32 traverse the membrane as a helical segment; sequence SLYIGDLVFYIVTFIILMLLV. 2 stretches are compositionally biased toward basic and acidic residues: residues 63–74 and 116–131; these read ESAEKMAAKRQA and AQKDAEQARRDALNSA. The disordered stretch occupies residues 63–131; sequence ESAEKMAAKR…QARRDALNSA (69 aa).

Belongs to the ATPase B chain family. F-type ATPases have 2 components, F(1) - the catalytic core - and F(0) - the membrane proton channel. F(1) has five subunits: alpha(3), beta(3), gamma(1), delta(1), epsilon(1). F(0) has three main subunits: a(1), b(2) and c(10-14). The alpha and beta chains form an alternating ring which encloses part of the gamma chain. F(1) is attached to F(0) by a central stalk formed by the gamma and epsilon chains, while a peripheral stalk is formed by the delta and b chains.

Its subcellular location is the cell membrane. F(1)F(0) ATP synthase produces ATP from ADP in the presence of a proton or sodium gradient. F-type ATPases consist of two structural domains, F(1) containing the extramembraneous catalytic core and F(0) containing the membrane proton channel, linked together by a central stalk and a peripheral stalk. During catalysis, ATP synthesis in the catalytic domain of F(1) is coupled via a rotary mechanism of the central stalk subunits to proton translocation. Functionally, component of the F(0) channel, it forms part of the peripheral stalk, linking F(1) to F(0). The sequence is that of ATP synthase subunit b from Limosilactobacillus reuteri (strain DSM 20016) (Lactobacillus reuteri).